We begin with the raw amino-acid sequence, 402 residues long: MDKLTVQDLSPEEKKVLVRVDFNVPMQDGKILDDIRIRSAMPTINYLLKKHAAVILMSHLGRPKGQGFQEEYSLQPVVDVLEGYLGHHVPLAPDCVGEVARQAVAQLSPGRVLLLENLRFHIGEEHPEKDPTFAAELSSYGDFYVNDAFGTSHRKHASVYVVPQAFPGRAAAGLLMEKELEFLGRHLLTSPKRPFTAILGGAKISSKIGVIEALLNQVDYLLLAGGMGFTFLQALGKSLGNSLVEKSALDLARNVLKIAKSRNVTIVLPSDVKAAENLQSKEYSVISIDQGIPPHLQGFDIGPRTTEEFIRIINQSATVFWNGPVGVYEVPPFDSGSIAIANALGNHPSAVTVVGGGDAAAVVALAGCSTKVSHVSTGGGASLEFLEQGFLPGTEVLSPSKS.

Substrate-binding positions include D21–N23, R36, H59–R62, R119, and R154. ATP is bound by residues K207, G298, E329, and G356–A359.

Belongs to the phosphoglycerate kinase family. Monomer.

The protein localises to the cytoplasm. The enzyme catalyses (2R)-3-phosphoglycerate + ATP = (2R)-3-phospho-glyceroyl phosphate + ADP. It functions in the pathway carbohydrate degradation; glycolysis; pyruvate from D-glyceraldehyde 3-phosphate: step 2/5. The polypeptide is Phosphoglycerate kinase (pgk) (Chlamydia pneumoniae (Chlamydophila pneumoniae)).